A 73-amino-acid chain; its full sequence is Dermaseptin-H4 (73 aa).

A signal peptide spans 1–22; sequence MAFMKKSLFLVLFLGMVSLSIC. Residues 23–43 constitute a propeptide that is removed on maturation; it reads EEEKRENEDEAKQEDDEQSEM. Positions 25 to 45 are disordered; the sequence is EKRENEDEAKQEDDEQSEMKR. Residues 30 to 40 show a composition bias toward acidic residues; sequence EDEAKQEDDEQ. Leucine 70 is subject to Leucine amide. A propeptide spanning residues 72 to 73 is cleaved from the precursor; it reads EQ.

As to expression, expressed by the skin glands.

It is found in the secreted. In terms of biological role, has antibacterial activity against the Gram-negative bacteria E.coli ATCC 11775 (MIC=0.8 uM), and the Gram-positive bacteria S.aureus ATCC 12600 (MIC=0.4 uM) and M.luteus ATCC 49732 (MIC=0.8 uM). Does not inhibit the growth of the fungus C.albicans. Probably acts by disturbing membrane functions with its amphipathic structure. This is Dermaseptin-H4 from Pithecopus azureus (Orange-legged monkey tree frog).